Here is a 227-residue protein sequence, read N- to C-terminus: Large ribosomal subunit protein uL3 (227 aa).

The tract at residues 129–154 (GMQPVSHGQSDRTRSRGSSGAQGPQK) is disordered.

The protein belongs to the universal ribosomal protein uL3 family. As to quaternary structure, part of the 50S ribosomal subunit. Forms a cluster with proteins L14 and L19.

Its function is as follows. One of the primary rRNA binding proteins, it binds directly near the 3'-end of the 23S rRNA, where it nucleates assembly of the 50S subunit. This is Large ribosomal subunit protein uL3 from Endomicrobium trichonymphae.